Reading from the N-terminus, the 649-residue chain is V-type ATP synthase subunit I (649 aa).

The next 7 membrane-spanning stretches (helical) occupy residues 312-332, 360-380, 453-473, 485-505, 520-540, 556-576, and 593-613; these read FFSF…GLVF, FMIL…FFGV, FIDN…LSLG, IGWV…LQAV, GLVG…GGVI, VFSD…GAMV, and ILII…GGVI.

It belongs to the V-ATPase 116 kDa subunit family.

The protein resides in the cell membrane. Its function is as follows. Produces ATP from ADP in the presence of a proton gradient across the membrane. The sequence is that of V-type ATP synthase subunit I (atpI) from Chlamydia trachomatis serovar D (strain ATCC VR-885 / DSM 19411 / UW-3/Cx).